Reading from the N-terminus, the 290-residue chain is MIKSSWRKIAMLAAAVPLLLASGALWASTDAIHQKLTDLEKRSGGRLGVALINTADNSQILYRGDERFAMCSTSKVMAAAAVLKQSESNKEVVNKRLEINAADLVVWSPITEKHLQSGMTLAELSAATLQYSDNTAMNLIIGYLGGPEKVTAFARSIGDATFRLDRTEPTLNTAIPGDERDTSTPLAMAESLRKLTLGDALGEQQRAQLVTWLKGNTTGGQSIRAGLPESWVVGDKTGAGDYGTTNDIAVIWPEDHAPLVLVTYFTQPQQDAKNRKEVLAAAAKIVTEGL.

The first 27 residues, 1–27 (MIKSSWRKIAMLAAAVPLLLASGALWA), serve as a signal peptide directing secretion. Catalysis depends on S72, which acts as the Acyl-ester intermediate. Position 236–238 (236–238 (KTG)) interacts with substrate.

Belongs to the class-A beta-lactamase family.

The catalysed reaction is a beta-lactam + H2O = a substituted beta-amino acid. Its function is as follows. Hydrolyzes broad-spectrum beta-lactam antibiotics. Active against all third-generation cephalosporins but ceftazidime. In Klebsiella oxytoca, this protein is Beta-lactamase OXY-2 (bla).